The sequence spans 405 residues: Magnesium-protoporphyrin IX monomethyl ester [oxidative] cyclase, chloroplastic (405 aa).

A chloroplast-targeting transit peptide spans 1-44 (MAAEMALVKPITPKFINPMRTFSSSSKFSTIKMSATSQSNTTTT). Residues 33–47 (MSATSQSNTTTTATK) show a composition bias toward low complexity. Residues 33–54 (MSATSQSNTTTTATKPSKKGNK) are disordered.

It belongs to the AcsF family. It depends on Fe cation as a cofactor.

The protein localises to the plastid. Its subcellular location is the chloroplast. It carries out the reaction Mg-protoporphyrin IX 13-monomethyl ester + 3 NADPH + 3 O2 + 2 H(+) = 3,8-divinyl protochlorophyllide a + 3 NADP(+) + 5 H2O. Its pathway is porphyrin-containing compound metabolism; chlorophyll biosynthesis. Catalyzes the formation of the isocyclic ring in chlorophyll biosynthesis. Mediates the cyclase reaction, which results in the formation of divinylprotochlorophyllide (Pchlide) characteristic of all chlorophylls from magnesium-protoporphyrin IX 13-monomethyl ester (MgPMME). In Euphorbia esula (Leafy spurge), this protein is Magnesium-protoporphyrin IX monomethyl ester [oxidative] cyclase, chloroplastic (CRD1).